A 47-amino-acid polypeptide reads, in one-letter code: Photosystem II reaction center protein K (47 aa).

Positions 1-10 (MAAFTLDLMA) are excised as a propeptide. The chain crosses the membrane as a helical span at residues 20–40 (APAVDVLPLIPIFFFLLVFVW).

The protein belongs to the PsbK family. As to quaternary structure, PSII is composed of 1 copy each of membrane proteins PsbA, PsbB, PsbC, PsbD, PsbE, PsbF, PsbH, PsbI, PsbJ, PsbK, PsbL, PsbM, PsbT, PsbX, PsbY, Psb30/Ycf12, peripheral proteins PsbO, CyanoQ (PsbQ), PsbU, PsbV and a large number of cofactors. It forms dimeric complexes.

The protein resides in the cellular thylakoid membrane. Its function is as follows. One of the components of the core complex of photosystem II (PSII). PSII is a light-driven water:plastoquinone oxidoreductase that uses light energy to abstract electrons from H(2)O, generating O(2) and a proton gradient subsequently used for ATP formation. It consists of a core antenna complex that captures photons, and an electron transfer chain that converts photonic excitation into a charge separation. The chain is Photosystem II reaction center protein K from Prochlorococcus marinus (strain MIT 9303).